Consider the following 147-residue polypeptide: Hemoglobin subunit epsilon (147 aa).

The Globin domain maps to 3–147; that stretch reads HFTAEEKSTI…VATALAHKYH (145 aa). A phosphoserine mark is found at Ser-14 and Ser-51. Heme b is bound by residues His-64 and His-93.

It belongs to the globin family. In terms of assembly, heterotetramer of two alpha chains and two epsilon chains in early embryonic hemoglobin Gower-2; two zeta chains and two epsilon chains in early embryonic hemoglobin Gower-1. In terms of tissue distribution, red blood cells.

In terms of biological role, the epsilon chain is a beta-type chain of early mammalian embryonic hemoglobin. In Microcebus murinus (Gray mouse lemur), this protein is Hemoglobin subunit epsilon (HBE1).